The following is a 75-amino-acid chain: UPF0270 protein Pfl01_4103 (75 aa).

It belongs to the UPF0270 family.

The polypeptide is UPF0270 protein Pfl01_4103 (Pseudomonas fluorescens (strain Pf0-1)).